Reading from the N-terminus, the 321-residue chain is ATP-dependent 6-phosphofructokinase (321 aa).

ATP is bound at residue glycine 12. Residues 22-26 (RAVVR) and 55-60 (RYSVSD) each bind ADP. ATP-binding positions include 73-74 (RF) and 103-106 (GDGS). Aspartate 104 contacts Mg(2+). A substrate-binding site is contributed by 127-129 (TID). Residue aspartate 129 is the Proton acceptor of the active site. Residue arginine 156 participates in ADP binding. Residues arginine 164 and 171 to 173 (MGR) contribute to the substrate site. ADP contacts are provided by residues 187-189 (GCE) and 215-217 (KRH). Substrate contacts are provided by residues glutamate 224, arginine 245, and 251-254 (HVQR).

This sequence belongs to the phosphofructokinase type A (PFKA) family. ATP-dependent PFK group I subfamily. Prokaryotic clade 'B1' sub-subfamily. Homotetramer. It depends on Mg(2+) as a cofactor.

It localises to the cytoplasm. It catalyses the reaction beta-D-fructose 6-phosphate + ATP = beta-D-fructose 1,6-bisphosphate + ADP + H(+). It functions in the pathway carbohydrate degradation; glycolysis; D-glyceraldehyde 3-phosphate and glycerone phosphate from D-glucose: step 3/4. Its activity is regulated as follows. Allosterically activated by ADP and other diphosphonucleosides, and allosterically inhibited by phosphoenolpyruvate. Its function is as follows. Catalyzes the phosphorylation of D-fructose 6-phosphate to fructose 1,6-bisphosphate by ATP, the first committing step of glycolysis. This Actinobacillus succinogenes (strain ATCC 55618 / DSM 22257 / CCUG 43843 / 130Z) protein is ATP-dependent 6-phosphofructokinase.